The chain runs to 84 residues: UPF0153 protein PA1578.1 (84 aa).

Belongs to the UPF0153 family.

The sequence is that of UPF0153 protein PA1578.1 from Pseudomonas aeruginosa (strain ATCC 15692 / DSM 22644 / CIP 104116 / JCM 14847 / LMG 12228 / 1C / PRS 101 / PAO1).